Reading from the N-terminus, the 440-residue chain is Sorting nexin-31 (440 aa).

Residues 1–109 enclose the PX domain; that stretch reads MKMHFCIPVS…EFLKLAQLNT (109 aa).

This sequence belongs to the sorting nexin family. Interacts with CCDC22, CCDC93, VPS26C and VPS35L, associates with the retriever and CCC complexes.

May be involved in protein trafficking. The polypeptide is Sorting nexin-31 (SNX31) (Homo sapiens (Human)).